Here is a 345-residue protein sequence, read N- to C-terminus: Phosphoribosylformylglycinamidine cyclo-ligase (345 aa).

The protein belongs to the AIR synthase family.

It localises to the cytoplasm. It catalyses the reaction 2-formamido-N(1)-(5-O-phospho-beta-D-ribosyl)acetamidine + ATP = 5-amino-1-(5-phospho-beta-D-ribosyl)imidazole + ADP + phosphate + H(+). The protein operates within purine metabolism; IMP biosynthesis via de novo pathway; 5-amino-1-(5-phospho-D-ribosyl)imidazole from N(2)-formyl-N(1)-(5-phospho-D-ribosyl)glycinamide: step 2/2. This chain is Phosphoribosylformylglycinamidine cyclo-ligase, found in Shewanella sp. (strain ANA-3).